Here is a 279-residue protein sequence, read N- to C-terminus: Ribosomal RNA small subunit methyltransferase I (279 aa).

The protein belongs to the methyltransferase superfamily. RsmI family.

It localises to the cytoplasm. It carries out the reaction cytidine(1402) in 16S rRNA + S-adenosyl-L-methionine = 2'-O-methylcytidine(1402) in 16S rRNA + S-adenosyl-L-homocysteine + H(+). Functionally, catalyzes the 2'-O-methylation of the ribose of cytidine 1402 (C1402) in 16S rRNA. This Synechocystis sp. (strain ATCC 27184 / PCC 6803 / Kazusa) protein is Ribosomal RNA small subunit methyltransferase I.